The chain runs to 504 residues: Nuclear hormone receptor family member nhr-80 (504 aa).

A DNA-binding region (nuclear receptor) is located at residues 27–103 (STRCLICSAQ…NGMKPGGVQP (77 aa)). NR C4-type zinc fingers lie at residues 30-50 (CLIC…CSAC) and 66-86 (CITG…CRSC). Positions 177–192 (SSSTSFSASTTTNYST) are enriched in low complexity. Positions 177-199 (SSSTSFSASTTTNYSTPGPSPMA) are disordered. In terms of domain architecture, NR LBD spans 214 to 466 (EEMKLGERRR…KLVLQLLNLD (253 aa)). The tract at residues 455–466 (LDKLVLQLLNLD) is AF-2.

The protein belongs to the nuclear hormone receptor family. As to quaternary structure, interacts with nuclear hormone receptor nhr-49; the interaction is direct. As to expression, expressed in the intestine and in some head and tail neurons, as well as the ventral nerve cord.

It is found in the nucleus. Functionally, transcription factor. Binds to regulatory elements and regulates transcription of target genes, including acyltransferase dgat-2. As part of a lysosome-to-nucleus retrograde lipid signaling pathway, acts as a direct nuclear receptor of oleoylethanolamide (OEA) and, acting in concert with nuclear hormone receptor nhr-49, activates the transcription of genes promoting longevity and mitochondrial beta-oxidation. Required to modulate expression of delta-9 fatty acid desaturases, thereby regulating lipid metabolism; in some contexts, acting in concert with nhr-49. Involved in modulation of lipid metabolism in response to the citrate-induced mitochondrial unfolded protein response (mtUPR), acting downstream of transcription factor dve-1 and ubiquitin-like protein 5. Plays a role in modulating mitochondrial morphology and function. Involved in positively modulating life-span in a germline-dependent manner, acting in concert with nuclear hormone receptor daf-12. Plays a role in transgenerational lipid accumulation in response to a high-fat diet. This Caenorhabditis elegans protein is Nuclear hormone receptor family member nhr-80.